A 1113-amino-acid chain; its full sequence is Sterol regulatory element binding protein sbp-1 (1113 aa).

Residues 1 to 52 (MNEEFEGDVPMSDPFLSLVTKLDDIAPFPNNDPLDFDMEHNWQEPGPSQQPD) form a transcriptional activation (acidic) region. Disordered stretches follow at residues 24-68 (DIAP…EYYD), 101-132 (LGGGRGPSLAATQQLSGEGPASMLNPLQTSPP), 206-274 (SPYD…SPQN), and 290-345 (EVER…SQGT). The span at 229 to 238 (PHHHHHHPMP) shows a compositional bias: basic residues. Positions 324 to 337 (AEGDEDEDDEDSDS) are enriched in acidic residues. Positions 355–368 (ERRTAHNLIEKKYR) are basic motif. Residues 355-405 (ERRTAHNLIEKKYRCSINDRIQQLKVLLCGDEAKLSKSATLRRAIEHIEEV) form the bHLH domain. Residues 369 to 405 (CSINDRIQQLKVLLCGDEAKLSKSATLRRAIEHIEEV) form a helix-loop-helix motif region. A coiled-coil region spans residues 395 to 422 (LRRAIEHIEEVEHENQVLKHHVEQMRKT). Residues 437 to 472 (TEYSARSPVESSPSPPRNERKRSRMSTTTPMKNGTR) are disordered. 2 helical membrane passes run 478 to 498 (VTLFAMLLAVLIFNPIGLLAG) and 541 to 561 (MSYVWVFNILMIIYVVVKLLI).

Post-translationally, processed in the Golgi apparatus, releasing the protein from the membrane. In terms of processing, ubiquitinated; the nuclear form has a rapid turnover and is rapidly ubiquitinated and degraded by the proteasome in the nucleus. In terms of tissue distribution, broadly expressed, including many cells in the head. Expressed in the intestine.

Its subcellular location is the nucleus. The protein localises to the endoplasmic reticulum membrane. Functionally, transcription factor involved in maintaining normal fat levels. Regulates the expression of genes involved in lipid metabolism in response to nutrient availability, such as the fatty-acid desaturases fat-5, fat-6 and fat-7. In response to a high-glucose diet, promotes fatty acid synthesis, elongation and desaturation, acting in concert with transcription factor mxl-3. Plays a role in synthesis of monomethyl branched-chain fatty acids (mmBCFAs) as well as other very-long-chain fatty acids. Downstream of the cis-Golgi membrane protein eas-1/GOLT1B and the E3 ubiquitin ligase rnf-145/RNF145, plays a role in the regulation of glial size, perhaps by modulating synthesis of long-chain polyunsaturated fatty-acids (LC-PUFA). Modulates expression of genes in the one-carbon cycle, which produces the methyl donor S-adenosylmethionine (SAM). Probably involved in a feedback loop in which decreased levels of SAM lead to increased transcriptional activity of sbp-1, thereby causing lipid accumulation. Involved in the negative regulation of zinc homeostasis. Involved in the response to simulated microgravity, in concert with Mediator complex subunit mdt-15, probably acting in the intestine. Plays a role in transgenerational lipid accumulation in response to a high-fat diet, probably acting by upregulating wdr-5.1 expression to increase the level of trimethylated 'Lys-4' histone H3 (H3K4me3), which may then induce the expression of fat-5, fat-6 and fat-7. May act as an oxygen sensor for lipid metabolism. In terms of biological role, precursor of the transcription factor form, which is embedded in the endoplasmic reticulum membrane. Processing of this form allows release of the transcription factor form that translocates into the nucleus and activates transcription of genes involved in sterol biosynthesis and lipid homeostasis. Its function is as follows. Key transcription factor that regulates expression of genes involved in sterol biosynthesis and lipid homeostasis. This is Sterol regulatory element binding protein sbp-1 from Caenorhabditis elegans.